The chain runs to 394 residues: Phosphoglycerate kinase (394 aa).

Residues 21–23, arginine 36, 59–62, arginine 118, and arginine 151 each bind substrate; these read DFN and HLGR. Serine 183 carries the post-translational modification Phosphoserine. An ATP-binding site is contributed by lysine 201. Threonine 299 is modified (phosphothreonine). Residues glutamate 323 and 350–353 contribute to the ATP site; that span reads GGDS.

Belongs to the phosphoglycerate kinase family. In terms of assembly, monomer.

It is found in the cytoplasm. The catalysed reaction is (2R)-3-phosphoglycerate + ATP = (2R)-3-phospho-glyceroyl phosphate + ADP. It participates in carbohydrate degradation; glycolysis; pyruvate from D-glyceraldehyde 3-phosphate: step 2/5. This chain is Phosphoglycerate kinase, found in Geobacillus kaustophilus (strain HTA426).